Reading from the N-terminus, the 148-residue chain is Snaclec 3 (148 aa).

Residues 1–23 form the signal peptide; the sequence is WGDSSSSASACWSCSSPLSGTEA. 3 disulfide bridges follow: C27–C38, C55–C144, and C121–C136. The 112-residue stretch at 34 to 145 folds into the C-type lectin domain; that stretch reads YDQNCYKAFE…CSGTHSFVCK (112 aa).

Belongs to the snaclec family. As to quaternary structure, heterodimer; disulfide-linked. In terms of tissue distribution, expressed by the venom gland.

It is found in the secreted. In terms of biological role, interferes with one step of hemostasis (modulation of platelet aggregation, or coagulation cascade, for example). In Echis carinatus sochureki (Saw-scaled viper), this protein is Snaclec 3.